The chain runs to 303 residues: MDQYDTTKMIQEIDEFSSKVIAFNSNVYTKITPEAEKSFKKKSVIDIDCLTTEKQIELMKLSIKHKHPKYSFIELSNKFSVDLSCDDNMFLKLAVNYNDEEVLKYLIDSGIDVTVENNFAVKLQSGIIHNNRIIDLLINNGADITVDNYFPYRYAASEQNKEALKILFSYNPNVDSTMLLASINPSEIGAPILDFLISLNADVNINNGAILRENNQYYPVVKSLLAAGADVSYLSTKHLVKIIRSHNKRIIDIYIKFGVDFSKINDIAIEEKDQEYVDTLINWGIEPRVLACLFSSKLSKYRK.

4 ANK repeats span residues 86-115, 117-146, 147-176, and 200-233; these read DDNM…DVTV, NNFA…DITV, DNYF…NVDS, and NADV…DVSY.

This Acanthamoeba polyphaga (Amoeba) protein is Putative ankyrin repeat protein R601.